We begin with the raw amino-acid sequence, 44 residues long: Large ribosomal subunit protein bL34 (44 aa).

Belongs to the bacterial ribosomal protein bL34 family.

The polypeptide is Large ribosomal subunit protein bL34 (Wolbachia pipientis wMel).